The primary structure comprises 174 residues: UPF0316 protein lin1888 (174 aa).

3 helical membrane-spanning segments follow: residues 4-24 (GIFIVATIFVVNILYVTIYTV), 36-56 (LAALSSVFEMIIYVVALSLVL), and 62-82 (IANVLAYAVGFGVGIIVGMKI).

Belongs to the UPF0316 family.

The protein localises to the cell membrane. The sequence is that of UPF0316 protein lin1888 from Listeria innocua serovar 6a (strain ATCC BAA-680 / CLIP 11262).